The chain runs to 386 residues: MESSEPEPTEDASMDAFLEKFQSQPYRGGFREDQWEEEFDKIPLFMKKAPSEIDPEEFPDLACLQSMIFDDDRYPEEQAKTYKDEGNDYFKEKDYKKAVLSYSEGLKKKCADPDLNAVLYTNRAAAQYYLGNVRSSLNDVLAAKKLKPGHLKAIIRGALCHLELKHFAEAVNWCDEGLQIDAKEKKLLEIRAKADKLKRMEERDLRKAKLKEKKEQHQNEALLQAIKARNIRLVSESAGEDEDSASNGPAEILLDGLSSENPYGARLSIDDQGRLSWPVLFLYPEYAQSDFISAFHEDTRFIDHLMAMFSEAPSWDSEHKYHPENLEVYFEDEDRAELYQVSPDSTLLQVLQHPRCCVKALTPAFLVCVGSSPFCRNYLQGKKVHR.

Met-1 carries the N-acetylmethionine modification. The residue at position 51 (Ser-51) is a Phosphoserine. TPR repeat units lie at residues Ala-79 to Asp-112, Ala-117 to His-150, and Leu-151 to Glu-184. Ser-244 carries the phosphoserine modification.

It belongs to the TTC4 family. In terms of assembly, interacts (via TPR repeats) with HSP90AB1. Interacts with HSPA8, CDC6 and TBK1. Interacts with isoform 1 and isoform 3 of MSL1. As to expression, expressed at high levels in the heart, testis, kidney, brain and tongue. Expressed at low levels in the stomach, lung and liver.

It localises to the nucleus. It is found in the nucleoplasm. The protein resides in the cytoplasm. In terms of biological role, may act as a co-chaperone for HSP90AB1. The sequence is that of Tetratricopeptide repeat protein 4 (Ttc4) from Mus musculus (Mouse).